Reading from the N-terminus, the 612-residue chain is Chloride intracellular channel protein 6 (612 aa).

A disordered region spans residues 1 to 373; the sequence is MAEATEPKEV…NGPASEEGDL (373 aa). The span at 34–51 shows a compositional bias: basic and acidic residues; that stretch reads LEGREASEGAAEAPRDLG. Position 40 is a phosphoserine (serine 40). Low complexity predominate over residues 84–96; sequence PGTETPGTSGAPG. Over residues 120-129 the composition is skewed to polar residues; that stretch reads QQVQGTSSGL. Basic and acidic residues predominate over residues 140–153; the sequence is EDARREPEDPKASE. Residues 208 to 223 are compositionally biased toward low complexity; it reads SSPQPQDEAIEIAAAE. Composition is skewed to basic and acidic residues over residues 240 to 264 and 275 to 303; these read AKGE…RVDS and EEAR…RPES. A phosphoserine mark is found at serine 264, serine 303, and serine 321. Composition is skewed to basic and acidic residues over residues 325 to 335 and 354 to 364; these read EEAKSTGHEES and ELGRVNGRREN. Serine 368 bears the Phosphoserine mark. The G-site motif lies at 395 to 398; it reads CPFS. The chain crosses the membrane as a helical span at residues 397–417; the sequence is FSQRLFMILWLKGVIFNVTTV. Positions 441–612 constitute a GST C-terminal domain; that stretch reads DGEVKTDVNK…AYSDAAKRMK (172 aa).

It belongs to the chloride channel CLIC family. Monomer (soluble state). Interacts with dopamine receptors DRD2, DRD3 and DRD4. In terms of processing, phosphorylated. As to expression, predominantly expressed in brain, pituitary and stomach. In adult brain, it is restricted to the choroid plexus, the striatal proliferative subventricular zone and the cerebellum where it colocalizes with the D(3)R in the Purkinje cells of the lobules IX and X.

It is found in the cytoplasm. It localises to the cell membrane. The catalysed reaction is chloride(in) = chloride(out). Channel activity is redox- and pH-regulated. Inhibited by IAA-94. Functionally, in the soluble state, catalyzes glutaredoxin-like thiol disulfide exchange reactions with reduced glutathione as electron donor. Can insert into membranes and form voltage-dependent chloride-selective channels. The channel opens upon membrane depolarization at positive voltages and closes at negative membrane voltages. May play a critical role in water-secreting cells, possibly through the regulation of chloride ion transport. The protein is Chloride intracellular channel protein 6 (Clic6) of Rattus norvegicus (Rat).